Here is a 558-residue protein sequence, read N- to C-terminus: Polypeptide N-acetylgalactosaminyltransferase 16 (558 aa).

The Cytoplasmic portion of the chain corresponds to 1–6 (MRKIRA). A helical; Signal-anchor for type II membrane protein transmembrane segment spans residues 7–26 (NAIAILTVAWILGTFYYLWQ). Residues 27–558 (DNRAHAASSG…AQQWQLLPHT (532 aa)) are Lumenal-facing. The segment at 33-54 (ASSGGRGAQRAGRRSEQLREDR) is disordered. A compositionally biased stretch (basic and acidic residues) spans 45–54 (RRSEQLREDR). Intrachain disulfides connect cysteine 113-cysteine 340, cysteine 331-cysteine 409, cysteine 441-cysteine 460, cysteine 486-cysteine 506, and cysteine 530-cysteine 543. Residues 122 to 227 (LPATSVIITF…TEWLPPMLQR (106 aa)) are catalytic subdomain A. Positions 163 and 188 each coordinate substrate. Mn(2+) is bound at residue aspartate 211. Position 212 (serine 212) interacts with substrate. Position 213 (histidine 213) interacts with Mn(2+). The catalytic subdomain B stretch occupies residues 286-348 (PIRTPVIAGG…PCSRVGHVFR (63 aa)). Tryptophan 317 is a substrate binding site. Histidine 345 serves as a coordination point for Mn(2+). Substrate is bound by residues arginine 348, histidine 351, and tyrosine 353. In terms of domain architecture, Ricin B-type lectin spans 428–555 (KEALPGIIKQ…DAQAQQWQLL (128 aa)).

This sequence belongs to the glycosyltransferase 2 family. GalNAc-T subfamily. It depends on Mn(2+) as a cofactor.

It localises to the golgi apparatus membrane. The enzyme catalyses L-seryl-[protein] + UDP-N-acetyl-alpha-D-galactosamine = a 3-O-[N-acetyl-alpha-D-galactosaminyl]-L-seryl-[protein] + UDP + H(+). The catalysed reaction is L-threonyl-[protein] + UDP-N-acetyl-alpha-D-galactosamine = a 3-O-[N-acetyl-alpha-D-galactosaminyl]-L-threonyl-[protein] + UDP + H(+). The protein operates within protein modification; protein glycosylation. In terms of biological role, catalyzes the initial reaction in O-linked oligosaccharide biosynthesis, the transfer of an N-acetyl-D-galactosamine residue to a serine or threonine residue on the protein receptor. In Homo sapiens (Human), this protein is Polypeptide N-acetylgalactosaminyltransferase 16 (GALNT16).